The primary structure comprises 382 residues: Galactokinase (382 aa).

Substrate is bound at residue 34 to 37; the sequence is EHTD. 124–130 serves as a coordination point for ATP; it reads GAGLSSS. Mg(2+) contacts are provided by Ser130 and Glu162. Residue Asp174 is the Proton acceptor of the active site. Residue Tyr223 participates in substrate binding.

Belongs to the GHMP kinase family. GalK subfamily.

It is found in the cytoplasm. The enzyme catalyses alpha-D-galactose + ATP = alpha-D-galactose 1-phosphate + ADP + H(+). The protein operates within carbohydrate metabolism; galactose metabolism. In terms of biological role, catalyzes the transfer of the gamma-phosphate of ATP to D-galactose to form alpha-D-galactose-1-phosphate (Gal-1-P). The protein is Galactokinase of Escherichia coli O81 (strain ED1a).